A 197-amino-acid chain; its full sequence is TM2 domain-containing protein 1 (197 aa).

The signal sequence occupies residues 1-32; sequence MAFRWRSLMRFRSTTRLLLLFTFCLTVIHSLG. The Extracellular segment spans residues 33-105; sequence NDVDSCDKLH…GFNKTIPCRN (73 aa). Residues N77, N84, N98, and N105 are each glycosylated (N-linked (GlcNAc...) asparagine). Residues 106 to 126 traverse the membrane as a helical segment; sequence VSGYSYKVAVALSLFLGWIGA. The 48-residue stretch at 108–155 folds into the TM2 domain; that stretch reads GYSYKVAVALSLFLGWIGADRFYLGYPALGLLKFCTVGFCGIGSLVDF. The Cytoplasmic portion of the chain corresponds to 127–143; the sequence is DRFYLGYPALGLLKFCT. The helical transmembrane segment at 144–164 threads the bilayer; sequence VGFCGIGSLVDFMLISMQIVG. Residues 165–197 are Extracellular-facing; that stretch reads PSDGSDYIVDYYGARLTRLSITNETYRRMQPSP. N187 carries an N-linked (GlcNAc...) asparagine glycan.

This sequence belongs to the TM2 family.

The protein localises to the membrane. The chain is TM2 domain-containing protein 1 (tm2d1) from Danio rerio (Zebrafish).